We begin with the raw amino-acid sequence, 95 residues long: DASH complex subunit DAD3 (95 aa).

The protein belongs to the DASH complex DAD3 family. In terms of assembly, component of the DASH complex consisting of ASK1, DAD1, DAD2, DAD3, DAD4, DAM1, DUO1, HSK3, SPC19 and SPC34, with a stoichiometry of one copy of each subunit per complex. Multiple DASH complexes oligomerize to form a ring that encircles spindle microtubules and organizes the rod-like NDC80 complexes of the outer kinetochore. DASH complex oligomerization strengthens microtubule attachments. On cytoplasmic microtubules, DASH complexes appear to form patches instead of rings.

The protein localises to the chromosome. It localises to the centromere. Its subcellular location is the kinetochore. It is found in the cytoplasm. The protein resides in the cytoskeleton. The protein localises to the spindle. It localises to the nucleus. Component of the DASH complex that connects microtubules with kinetochores and couples microtubule depolymerisation to chromosome movement; it is involved in retrieving kinetochores to the spindle poles before their re-orientation on the spindle in early mitosis and allows microtubule depolymerization to pull chromosomes apart and resist detachment during anaphase. Kinetochores, consisting of a centromere-associated inner segment and a microtubule-contacting outer segment, play a crucial role in chromosome segregation by mediating the physical connection between centromeric DNA and microtubules. Kinetochores also serve as an input point for the spindle assembly checkpoint, which delays anaphase until all chromosomes have bioriented on the mitotic spindle. The chain is DASH complex subunit DAD3 from Chaetomium thermophilum (strain DSM 1495 / CBS 144.50 / IMI 039719) (Thermochaetoides thermophila).